The sequence spans 205 residues: Large ribosomal subunit protein bL25 (205 aa).

The tract at residues 178–205 (FPETEPVEDEESAGEDAQGESEEKAAKE) is disordered. Residues 182 to 197 (EPVEDEESAGEDAQGE) are compositionally biased toward acidic residues.

The protein belongs to the bacterial ribosomal protein bL25 family. CTC subfamily. As to quaternary structure, part of the 50S ribosomal subunit; part of the 5S rRNA/L5/L18/L25 subcomplex. Contacts the 5S rRNA. Binds to the 5S rRNA independently of L5 and L18.

Its function is as follows. This is one of the proteins that binds to the 5S RNA in the ribosome where it forms part of the central protuberance. The sequence is that of Large ribosomal subunit protein bL25 from Cutibacterium acnes (strain DSM 16379 / KPA171202) (Propionibacterium acnes).